A 357-amino-acid chain; its full sequence is MEVVEVLHMNGGNGDSSYANNSLVQQKVILMTKPITEQAMIDLYSSLFPETLCIADLGCSLGANTFLVVSQLVKIVEKERKKHGFKSPEFYFHFNDLPGNDFNTLFQSLGAFQEDLRKHIGESFGPCFFSGVPGSFYTRLFPSKSLHFVYSSYSLMWLSQVPNGIENNKGNIYMARTSPLSVIKAYYKQYEIDFSNFLKYRSEELMKGGKMVLTLLGRESEDPTSKECCYIWELLAMALNKLVEEGLIKEEKVDAFNIPQYTPSPAEVKYIVEKEGSFTINRLETSRVHWNASNNEKNGGYNVSRCMRAVAEPLLVSHFDKELMDLVFHKYEEIVSDCMSKENTEFINVIISLTKIN.

Tyr18 contacts S-adenosyl-L-homocysteine. Residue Gln25 coordinates benzoate. S-adenosyl-L-homocysteine-binding residues include Cys59, Asn64, Asp96, Leu97, Ser135, and Phe136. Residue Trp157 participates in benzoate binding. Mg(2+) contacts are provided by Asn168, Asp254, Phe256, and Asn257. Gln260 lines the benzoate pocket.

The protein belongs to the methyltransferase superfamily. Type-7 methyltransferase family. As to expression, predominantly expressed in petal limbs and tubes of corollas.

The enzyme catalyses benzoate + S-adenosyl-L-methionine = methyl benzoate + S-adenosyl-L-homocysteine. The catalysed reaction is salicylate + S-adenosyl-L-methionine = methyl salicylate + S-adenosyl-L-homocysteine. It participates in aromatic compound metabolism. Its function is as follows. Converts benzoic acid into the volatile ester methyl benzoates. This scent, mostly produced in a rhythmical, diurnal manner, attracts the pollinators. In Petunia hybrida (Petunia), this protein is S-adenosyl-L-methionine:benzoic acid/salicylic acid carboxyl methyltransferase 1.